The chain runs to 342 residues: MTNGYIGSYTKKNGKGIYRFELNENQSRIDLLETGFELEASTYLVRNNEVLYGINKEGEQCGVASLKIDDNGELHLLNKCLSSKAGTGCYVSISEDKRYLFEAVYGAGIIRMYELNTHTGEIIRLIQELAHDFPTGTHERQDHPHAHYINQTPDGKYVAVTDLGADRIVTYKFDDNGFEFYKESLFKDSDGTRHIEFHDNGKFAYVVHELSNTVSVAEYNDGKFEELERHLTIPENFDGDTKLAAVRLSHDQQFLYVSNRGHDSIAIFKVLDNGQHLELVTITESGGQFPRDFNIASSDDLLVCAHEQGDSVVTVFERNKETGKITLCDNTRVASEGVCVIF.

Belongs to the cycloisomerase 2 family.

This is an uncharacterized protein from Staphylococcus aureus (strain NCTC 8325 / PS 47).